The primary structure comprises 433 residues: Protoheme IX farnesyltransferase 2 (433 aa).

The interval 1–164 is unknown; sequence MQRFTGLVTA…LTKPRLMWLL (164 aa). The next 13 membrane-spanning stretches (helical) occupy residues 4-24, 35-55, 67-87, 95-115, 160-180, 184-204, 236-256, 257-277, 282-304, 308-330, 357-377, 378-398, and 413-433; these read FTGL…LGVA, AVAH…AAAL, WGVT…MAVL, LHLF…TWHL, LMWL…VTGA, GVTI…AGTF, AFGV…VNPL, AAAL…VVLK, WNTV…AVAG, LPAL…NLAI, ILYW…VAGF, GPVY…TVVV, and HASN…TMVI. Positions 165 to 430 are protoheme IX prenyltransferase; it reads CLLALSGMAL…ALLVAILVET (266 aa).

It in the C-terminal section; belongs to the UbiA prenyltransferase family. Protoheme IX farnesyltransferase subfamily.

The protein resides in the cell membrane. The catalysed reaction is heme b + (2E,6E)-farnesyl diphosphate + H2O = Fe(II)-heme o + diphosphate. The protein operates within porphyrin-containing compound metabolism; heme O biosynthesis; heme O from protoheme: step 1/1. Converts heme B (protoheme IX) to heme O by substitution of the vinyl group on carbon 2 of heme B porphyrin ring with a hydroxyethyl farnesyl side group. In Natronomonas pharaonis (strain ATCC 35678 / DSM 2160 / CIP 103997 / JCM 8858 / NBRC 14720 / NCIMB 2260 / Gabara) (Halobacterium pharaonis), this protein is Protoheme IX farnesyltransferase 2 (ctaB2).